Consider the following 642-residue polypeptide: RNA polymerase sigma factor RpoD (642 aa).

The tract at residues His-199–Glu-228 is disordered. A compositionally biased stretch (acidic residues) spans Asn-212 to Glu-228. Residues Met-403 to Thr-473 are sigma-70 factor domain-2. Positions Asp-427–Gln-430 match the Interaction with polymerase core subunit RpoC motif. The sigma-70 factor domain-3 stretch occupies residues Glu-482–Ala-558. The sigma-70 factor domain-4 stretch occupies residues Ile-571 to His-624. Residues Leu-597–Ala-616 constitute a DNA-binding region (H-T-H motif).

This sequence belongs to the sigma-70 factor family. RpoD/SigA subfamily. In terms of assembly, interacts transiently with the RNA polymerase catalytic core.

The protein localises to the cytoplasm. Functionally, sigma factors are initiation factors that promote the attachment of RNA polymerase to specific initiation sites and are then released. This sigma factor is the primary sigma factor during exponential growth. The chain is RNA polymerase sigma factor RpoD from Neisseria gonorrhoeae.